The sequence spans 192 residues: Peptidyl-tRNA hydrolase (192 aa).

Tyr-17 serves as a coordination point for tRNA. The active-site Proton acceptor is the His-22. 3 residues coordinate tRNA: Phe-67, Asn-69, and Asn-115.

This sequence belongs to the PTH family. In terms of assembly, monomer.

It is found in the cytoplasm. The enzyme catalyses an N-acyl-L-alpha-aminoacyl-tRNA + H2O = an N-acyl-L-amino acid + a tRNA + H(+). Its function is as follows. Hydrolyzes ribosome-free peptidyl-tRNAs (with 1 or more amino acids incorporated), which drop off the ribosome during protein synthesis, or as a result of ribosome stalling. In terms of biological role, catalyzes the release of premature peptidyl moieties from peptidyl-tRNA molecules trapped in stalled 50S ribosomal subunits, and thus maintains levels of free tRNAs and 50S ribosomes. The chain is Peptidyl-tRNA hydrolase from Methylobacillus flagellatus (strain ATCC 51484 / DSM 6875 / VKM B-1610 / KT).